The chain runs to 435 residues: MQRTPRMENLQARFDAVQDQLIDIYEKDTRSLEVQVTYWNLIRREQALFYYARQQGITRLGLYQVPLTSVSERKAKEAIKMSMYLTSLQKSPFAQLSWSLSETSPEMFFAPPESTFKKKGSHVTVVYDKDSNNAMEYAVWGEVFYVDETDTWHKAQSKVDYDGVYYTDAEGKKVYYVHFADDAAHYSVLGQWEVHFENNVLSPPVTSSFPGGPGRRQRPQTGSYSPGHKAPVTSRRRHSSSSDSHSSRRGSRPQSLSRSRSRSRSRSRSPSGSHARQRAPQDSGTNKSPGRQGGRRGDGGGGRGGGGGGVRVREDTFGGQPTQIAGRLGDRPAKAPEQTSRRLAQLIESANDPPVLLLQGCANTLKCFRRRTSHAHPHKFLCMSTSWTWSCKTTTHKSCHRMLVAFSDYEQRRCFLAGVKLPKGVTCVKGSLEAL.

The interval 1–208 (MQRTPRMENL…NVLSPPVTSS (208 aa)) is transactivation domain. Residues 203 to 339 (PPVTSSFPGG…DRPAKAPEQT (137 aa)) are disordered. Residues 280-289 (PQDSGTNKSP) show a composition bias toward polar residues. Residues 299 to 310 (GGGGRGGGGGGV) are compositionally biased toward gly residues. A DNA-binding domain region spans residues 352–435 (DPPVLLLQGC…TCVKGSLEAL (84 aa)).

It belongs to the papillomaviridae E2 protein family. Binds DNA as homodimer. Interacts with protein E1; this interaction greatly increases E1 DNA-binding activity. Interacts with protein L1; this interaction enhances E2-dependent replication and transcription activation. Interacts with protein L2; this interaction inhibits E2 transcriptional activity but not DNA replication function E2. Interacts with protein E7; this interaction inhibits E7 oncogenic activity. Interacts with host TAF1; this interaction modulates E2-dependent transcriptional regulation. Interacts with host BRD4; this interaction mediates E2 transcriptional activation function. Additionally, the interaction with host BRD4 on mitotic chromosomes mediates tethering of the viral genome. Interacts with host TOPBP1; this interaction is required for optimal viral DNA replication. Phosphorylated.

It localises to the host nucleus. Plays a role in the initiation of viral DNA replication. A dimer of E2 interacts with a dimer of E1 in order to improve specificity of E1 DNA binding activity. Once the complex recognizes and binds DNA at specific sites, the E2 dimer is removed from DNA. E2 also regulates viral transcription through binding to the E2RE response element (5'-ACCNNNNNNGGT-3') present in multiple copies in the regulatory regions of the viral genome. Activates or represses transcription depending on E2RE's position with regards to proximal promoter elements including the TATA-box. Repression occurs by sterically hindering the assembly of the transcription initiation complex. In Bos taurus papillomavirus 6 (Bovine papillomavirus 6), this protein is Regulatory protein E2.